The sequence spans 249 residues: uncharacterized protein (249 aa).

This sequence belongs to the AIM2 family.

It is found in the cytoplasm. It localises to the nucleus. This is an uncharacterized protein from Schizosaccharomyces pombe (strain 972 / ATCC 24843) (Fission yeast).